Consider the following 220-residue polypeptide: Ribosomal RNA large subunit methyltransferase E (220 aa).

S-adenosyl-L-methionine-binding residues include G64, W66, D84, D100, and D125. K165 acts as the Proton acceptor in catalysis.

This sequence belongs to the class I-like SAM-binding methyltransferase superfamily. RNA methyltransferase RlmE family.

The protein localises to the cytoplasm. The enzyme catalyses uridine(2552) in 23S rRNA + S-adenosyl-L-methionine = 2'-O-methyluridine(2552) in 23S rRNA + S-adenosyl-L-homocysteine + H(+). In terms of biological role, specifically methylates the uridine in position 2552 of 23S rRNA at the 2'-O position of the ribose in the fully assembled 50S ribosomal subunit. The polypeptide is Ribosomal RNA large subunit methyltransferase E (Thiobacillus denitrificans (strain ATCC 25259 / T1)).